The sequence spans 255 residues: tRNA (guanine-N(7)-)-methyltransferase (255 aa).

The span at 1-11 (MSISDNSRDQL) shows a compositional bias: basic and acidic residues. A disordered region spans residues 1-25 (MSISDNSRDQLGELPAGRPLQSDFD). 4 residues coordinate S-adenosyl-L-methionine: glutamate 83, glutamate 108, aspartate 135, and aspartate 158. Residue aspartate 158 is part of the active site. A substrate-binding site is contributed by lysine 162. Positions 164 to 169 (RHNKRR) are interaction with RNA. Residues aspartate 194 and 232 to 235 (TKFE) each bind substrate.

Belongs to the class I-like SAM-binding methyltransferase superfamily. TrmB family.

It catalyses the reaction guanosine(46) in tRNA + S-adenosyl-L-methionine = N(7)-methylguanosine(46) in tRNA + S-adenosyl-L-homocysteine. Its pathway is tRNA modification; N(7)-methylguanine-tRNA biosynthesis. Catalyzes the formation of N(7)-methylguanine at position 46 (m7G46) in tRNA. This Corynebacterium glutamicum (strain ATCC 13032 / DSM 20300 / JCM 1318 / BCRC 11384 / CCUG 27702 / LMG 3730 / NBRC 12168 / NCIMB 10025 / NRRL B-2784 / 534) protein is tRNA (guanine-N(7)-)-methyltransferase.